The following is a 407-amino-acid chain: Phosphopentomutase (407 aa).

6 residues coordinate Mn(2+): Asp10, Asp306, His311, Asp347, His348, and His359.

Belongs to the phosphopentomutase family. It depends on Mn(2+) as a cofactor.

Its subcellular location is the cytoplasm. It carries out the reaction 2-deoxy-alpha-D-ribose 1-phosphate = 2-deoxy-D-ribose 5-phosphate. It catalyses the reaction alpha-D-ribose 1-phosphate = D-ribose 5-phosphate. The protein operates within carbohydrate degradation; 2-deoxy-D-ribose 1-phosphate degradation; D-glyceraldehyde 3-phosphate and acetaldehyde from 2-deoxy-alpha-D-ribose 1-phosphate: step 1/2. Its function is as follows. Isomerase that catalyzes the conversion of deoxy-ribose 1-phosphate (dRib-1-P) and ribose 1-phosphate (Rib-1-P) to deoxy-ribose 5-phosphate (dRib-5-P) and ribose 5-phosphate (Rib-5-P), respectively. This chain is Phosphopentomutase, found in Enterobacter sp. (strain 638).